We begin with the raw amino-acid sequence, 649 residues long: Phosphomethylpyrimidine synthase (649 aa).

Residues asparagine 235, methionine 264, tyrosine 293, histidine 329, 349 to 351 (SRG), 390 to 393 (DGLR), and glutamate 429 contribute to the substrate site. A Zn(2+)-binding site is contributed by histidine 433. Tyrosine 456 contributes to the substrate binding site. Histidine 497 is a Zn(2+) binding site. [4Fe-4S] cluster-binding residues include cysteine 577, cysteine 580, and cysteine 585. The disordered stretch occupies residues 620 to 649 (GMRQKSQEFRDTGSELYHPAVGAKEAQLEE). A compositionally biased stretch (basic and acidic residues) spans 621–632 (MRQKSQEFRDTG).

Belongs to the ThiC family. In terms of assembly, homodimer. It depends on [4Fe-4S] cluster as a cofactor.

The enzyme catalyses 5-amino-1-(5-phospho-beta-D-ribosyl)imidazole + S-adenosyl-L-methionine = 4-amino-2-methyl-5-(phosphooxymethyl)pyrimidine + CO + 5'-deoxyadenosine + formate + L-methionine + 3 H(+). It functions in the pathway cofactor biosynthesis; thiamine diphosphate biosynthesis. In terms of biological role, catalyzes the synthesis of the hydroxymethylpyrimidine phosphate (HMP-P) moiety of thiamine from aminoimidazole ribotide (AIR) in a radical S-adenosyl-L-methionine (SAM)-dependent reaction. The protein is Phosphomethylpyrimidine synthase of Vibrio atlanticus (strain LGP32) (Vibrio splendidus (strain Mel32)).